A 920-amino-acid polypeptide reads, in one-letter code: Non-structural polyprotein 1A (920 aa).

Transmembrane regions (helical) follow at residues 239-259 (VFYY…LAIG), 286-306 (VLPT…TLMV), 313-333 (LLAI…LCFM), and 344-364 (GLIA…LTGT). Catalysis depends on charge relay system; for serine protease activity residues His-461, Asp-489, and Ser-551. Position 693 is an O-(5'-phospho-RNA)-tyrosine (Tyr-693). Disordered regions lie at residues 752 to 815 (NFDQ…QTYG) and 900 to 920 (NKAP…TIIH). Residues 783–795 (SQKKDKQLEHEQQ) show a composition bias toward basic and acidic residues. Residues 805–814 (NDPQPYSQTY) are compositionally biased toward polar residues.

This sequence belongs to the astroviridae polyprotein 1A family. Monomer. Post-translationally, cleaved by the viral and host proteases. The protease is probably autocatalytically cleaved.

It localises to the host membrane. The catalysed reaction is RNA(n) + a ribonucleoside 5'-triphosphate = RNA(n+1) + diphosphate. Responsible for the cleavage of the polyprotein into functional products. Functionally, protein covalently attached to the 5' extremity of the genomic and subgenomic RNAs. It may serve as a primer for the replicase. This chain is Non-structural polyprotein 1A (ORF1), found in Homo sapiens (Human).